We begin with the raw amino-acid sequence, 162 residues long: uncharacterized protein (162 aa).

Pentapeptide repeat domains lie at 33-72 (ASLI…NMTE), 73-112 (VCLI…DLRK), and 113-152 (ANLS…YISD).

This is an uncharacterized protein from Synechocystis sp. (strain ATCC 27184 / PCC 6803 / Kazusa).